The following is a 326-amino-acid chain: Glycerol-3-phosphate dehydrogenase [NAD(P)+] (326 aa).

Residues tryptophan 16, arginine 36, arginine 37, and lysine 106 each contribute to the NADPH site. Residues lysine 106 and glycine 132 each coordinate sn-glycerol 3-phosphate. Alanine 136 is an NADPH binding site. 5 residues coordinate sn-glycerol 3-phosphate: lysine 187, aspartate 240, serine 250, arginine 251, and asparagine 252. Residue lysine 187 is the Proton acceptor of the active site. Arginine 251 lines the NADPH pocket. Positions 271 and 273 each coordinate NADPH.

This sequence belongs to the NAD-dependent glycerol-3-phosphate dehydrogenase family.

It is found in the cytoplasm. The enzyme catalyses sn-glycerol 3-phosphate + NAD(+) = dihydroxyacetone phosphate + NADH + H(+). The catalysed reaction is sn-glycerol 3-phosphate + NADP(+) = dihydroxyacetone phosphate + NADPH + H(+). It functions in the pathway membrane lipid metabolism; glycerophospholipid metabolism. In terms of biological role, catalyzes the reduction of the glycolytic intermediate dihydroxyacetone phosphate (DHAP) to sn-glycerol 3-phosphate (G3P), the key precursor for phospholipid synthesis. This is Glycerol-3-phosphate dehydrogenase [NAD(P)+] from Deinococcus geothermalis (strain DSM 11300 / CIP 105573 / AG-3a).